We begin with the raw amino-acid sequence, 467 residues long: Fumarate hydratase class II (467 aa).

Residues 98–100 (SGT), Arg126, 129–132 (HPND), 139–141 (SSN), and Thr187 each bind substrate. Catalysis depends on His188, which acts as the Proton donor/acceptor. Ser318 is an active-site residue. Substrate contacts are provided by residues Ser319 and 324 to 326 (KVN).

This sequence belongs to the class-II fumarase/aspartase family. Fumarase subfamily. As to quaternary structure, homotetramer.

It is found in the cytoplasm. It carries out the reaction (S)-malate = fumarate + H2O. The protein operates within carbohydrate metabolism; tricarboxylic acid cycle; (S)-malate from fumarate: step 1/1. In terms of biological role, involved in the TCA cycle. Catalyzes the stereospecific interconversion of fumarate to L-malate. This is Fumarate hydratase class II from Escherichia coli O6:H1 (strain CFT073 / ATCC 700928 / UPEC).